An 81-amino-acid polypeptide reads, in one-letter code: High-potential iron-sulfur protein (81 aa).

C43, C46, C59, and C73 together coordinate [4Fe-4S] cluster.

The protein belongs to the high-potential iron-sulfur protein (HiPIP) family. As to quaternary structure, homodimer.

It is found in the periplasm. Specific class of high-redox-potential 4Fe-4S ferredoxins. Functions in anaerobic electron transport in most purple and in some other photosynthetic bacteria and in at least one genus (Paracoccus) of halophilic, denitrifying bacteria. The protein is High-potential iron-sulfur protein of Halochromatium salexigens (Chromatium salexigens).